The primary structure comprises 596 residues: Transcription factor IIIB 70 kDa subunit (596 aa).

The segment at 1 to 33 (MPVCKNCHGTEFERDLSNANNDLVCKACGVVSE) adopts a TFIIB-type zinc-finger fold. Zn(2+) contacts are provided by Cys4, Cys7, Cys25, and Cys28. A run of 2 repeats spans residues 90–166 (VSYA…KMVK) and 185–264 (FAEK…EFKN). Disordered stretches follow at residues 363–421 (GENI…NESG) and 509–534 (IATG…EPTK). Positions 365–375 (NIYHEGSENET) are enriched in basic and acidic residues. Ser381 and Ser384 each carry phosphoserine. Basic and acidic residues predominate over residues 388-421 (EHVEGEDKETEGTEEKVKKVKTKTSEEKKENESG). The segment covering 516 to 526 (VKKKRTRRRNN) has biased composition (basic residues).

It belongs to the TFIIB family. As to quaternary structure, TFIIIB comprises the TATA-binding protein (TBP), the B-related factor (BRF) and the B' component (TFC5).

It localises to the nucleus. Its function is as follows. General activator of RNA polymerase III transcription. Interacts with TBP. Binds to Pol III subunit C34 and to the TAU135 component of TFIIIC. The protein is Transcription factor IIIB 70 kDa subunit (BRF1) of Saccharomyces cerevisiae (strain ATCC 204508 / S288c) (Baker's yeast).